Consider the following 315-residue polypeptide: 4-hydroxy-3-methylbut-2-enyl diphosphate reductase (315 aa).

[4Fe-4S] cluster is bound at residue Cys-12. The (2E)-4-hydroxy-3-methylbut-2-enyl diphosphate site is built by His-41 and His-74. The dimethylallyl diphosphate site is built by His-41 and His-74. Residues His-41 and His-74 each contribute to the isopentenyl diphosphate site. [4Fe-4S] cluster is bound at residue Cys-96. Residue His-124 participates in (2E)-4-hydroxy-3-methylbut-2-enyl diphosphate binding. Dimethylallyl diphosphate is bound at residue His-124. An isopentenyl diphosphate-binding site is contributed by His-124. Glu-126 functions as the Proton donor in the catalytic mechanism. (2E)-4-hydroxy-3-methylbut-2-enyl diphosphate is bound at residue Thr-167. A [4Fe-4S] cluster-binding site is contributed by Cys-197. Ser-225, Ser-226, Asn-227, and Ser-269 together coordinate (2E)-4-hydroxy-3-methylbut-2-enyl diphosphate. 4 residues coordinate dimethylallyl diphosphate: Ser-225, Ser-226, Asn-227, and Ser-269. The isopentenyl diphosphate site is built by Ser-225, Ser-226, Asn-227, and Ser-269.

This sequence belongs to the IspH family. Homodimer. [4Fe-4S] cluster serves as cofactor.

It catalyses the reaction isopentenyl diphosphate + 2 oxidized [2Fe-2S]-[ferredoxin] + H2O = (2E)-4-hydroxy-3-methylbut-2-enyl diphosphate + 2 reduced [2Fe-2S]-[ferredoxin] + 2 H(+). The catalysed reaction is dimethylallyl diphosphate + 2 oxidized [2Fe-2S]-[ferredoxin] + H2O = (2E)-4-hydroxy-3-methylbut-2-enyl diphosphate + 2 reduced [2Fe-2S]-[ferredoxin] + 2 H(+). The protein operates within isoprenoid biosynthesis; dimethylallyl diphosphate biosynthesis; dimethylallyl diphosphate from (2E)-4-hydroxy-3-methylbutenyl diphosphate: step 1/1. It participates in isoprenoid biosynthesis; isopentenyl diphosphate biosynthesis via DXP pathway; isopentenyl diphosphate from 1-deoxy-D-xylulose 5-phosphate: step 6/6. Its function is as follows. Catalyzes the conversion of 1-hydroxy-2-methyl-2-(E)-butenyl 4-diphosphate (HMBPP) into a mixture of isopentenyl diphosphate (IPP) and dimethylallyl diphosphate (DMAPP). Acts in the terminal step of the DOXP/MEP pathway for isoprenoid precursor biosynthesis. The protein is 4-hydroxy-3-methylbut-2-enyl diphosphate reductase of Wigglesworthia glossinidia brevipalpis.